The primary structure comprises 461 residues: Cysteine--tRNA ligase (461 aa).

C28 serves as a coordination point for Zn(2+). The 'HIGH' region signature appears at 30 to 40 (VTIYDLCHIGH). C211, H236, and E240 together coordinate Zn(2+). Residues 268 to 272 (KMSKS) carry the 'KMSKS' region motif. Residue K271 coordinates ATP.

This sequence belongs to the class-I aminoacyl-tRNA synthetase family. As to quaternary structure, monomer. Zn(2+) is required as a cofactor.

Its subcellular location is the cytoplasm. The catalysed reaction is tRNA(Cys) + L-cysteine + ATP = L-cysteinyl-tRNA(Cys) + AMP + diphosphate. This chain is Cysteine--tRNA ligase, found in Aliivibrio fischeri (strain ATCC 700601 / ES114) (Vibrio fischeri).